Reading from the N-terminus, the 323-residue chain is Thymidylate synthase (323 aa).

DUMP-binding positions include R21 and 172-173 (RR). The active-site Nucleophile is C192. DUMP-binding positions include 214–217 (RSND), N225, and 255–257 (HVY). (6R)-5,10-methylene-5,6,7,8-tetrahydrofolate is bound at residue D217. A322 is a binding site for (6R)-5,10-methylene-5,6,7,8-tetrahydrofolate.

Belongs to the thymidylate synthase family. Bacterial-type ThyA subfamily. Homodimer.

The protein resides in the cytoplasm. The catalysed reaction is dUMP + (6R)-5,10-methylene-5,6,7,8-tetrahydrofolate = 7,8-dihydrofolate + dTMP. It functions in the pathway pyrimidine metabolism; dTTP biosynthesis. In terms of biological role, catalyzes the reductive methylation of 2'-deoxyuridine-5'-monophosphate (dUMP) to 2'-deoxythymidine-5'-monophosphate (dTMP) while utilizing 5,10-methylenetetrahydrofolate (mTHF) as the methyl donor and reductant in the reaction, yielding dihydrofolate (DHF) as a by-product. This enzymatic reaction provides an intracellular de novo source of dTMP, an essential precursor for DNA biosynthesis. In Bordetella parapertussis (strain 12822 / ATCC BAA-587 / NCTC 13253), this protein is Thymidylate synthase.